The primary structure comprises 209 residues: Ribosomal RNA large subunit methyltransferase E (209 aa).

S-adenosyl-L-methionine-binding residues include Gly-63, Trp-65, Asp-83, Asp-99, and Asp-124. Lys-164 functions as the Proton acceptor in the catalytic mechanism.

Belongs to the class I-like SAM-binding methyltransferase superfamily. RNA methyltransferase RlmE family.

The protein resides in the cytoplasm. The enzyme catalyses uridine(2552) in 23S rRNA + S-adenosyl-L-methionine = 2'-O-methyluridine(2552) in 23S rRNA + S-adenosyl-L-homocysteine + H(+). Functionally, specifically methylates the uridine in position 2552 of 23S rRNA at the 2'-O position of the ribose in the fully assembled 50S ribosomal subunit. The polypeptide is Ribosomal RNA large subunit methyltransferase E (Pectobacterium atrosepticum (strain SCRI 1043 / ATCC BAA-672) (Erwinia carotovora subsp. atroseptica)).